The sequence spans 328 residues: Beta-ketoacyl-[acyl-carrier-protein] synthase III (328 aa).

Residues Cys122 and His255 contribute to the active site. Residues 256-260 are ACP-binding; it reads QANIR. Asn285 is a catalytic residue.

It belongs to the thiolase-like superfamily. FabH family. As to quaternary structure, homodimer.

It is found in the cytoplasm. The catalysed reaction is malonyl-[ACP] + acetyl-CoA + H(+) = 3-oxobutanoyl-[ACP] + CO2 + CoA. The protein operates within lipid metabolism; fatty acid biosynthesis. Catalyzes the condensation reaction of fatty acid synthesis by the addition to an acyl acceptor of two carbons from malonyl-ACP. Catalyzes the first condensation reaction which initiates fatty acid synthesis and may therefore play a role in governing the total rate of fatty acid production. Possesses both acetoacetyl-ACP synthase and acetyl transacylase activities. Its substrate specificity determines the biosynthesis of branched-chain and/or straight-chain of fatty acids. This is Beta-ketoacyl-[acyl-carrier-protein] synthase III from Polynucleobacter asymbioticus (strain DSM 18221 / CIP 109841 / QLW-P1DMWA-1) (Polynucleobacter necessarius subsp. asymbioticus).